The sequence spans 716 residues: uncharacterized protein (716 aa).

Disordered stretches follow at residues 84-103 (SPSI…ERYP) and 153-189 (VTDE…SQTQ). S97 is modified (phosphoserine). Glycyl lysine isopeptide (Lys-Gly) (interchain with G-Cter in SUMO2) cross-links involve residues K201, K204, K237, K283, and K626.

This is an uncharacterized protein from Homo sapiens (Human).